The chain runs to 95 residues: Translation initiation factor IF-1 (95 aa).

The S1-like domain occupies 1–72 (MAKEELIEMD…TKARITYRHK (72 aa)). The interval 70–95 (RHKVGGPPGPVTGGGNRPPPRQPRRR) is disordered. Pro residues predominate over residues 86-95 (RPPPRQPRRR).

Belongs to the IF-1 family. Component of the 30S ribosomal translation pre-initiation complex which assembles on the 30S ribosome in the order IF-2 and IF-3, IF-1 and N-formylmethionyl-tRNA(fMet); mRNA recruitment can occur at any time during PIC assembly.

It localises to the cytoplasm. Its function is as follows. One of the essential components for the initiation of protein synthesis. Stabilizes the binding of IF-2 and IF-3 on the 30S subunit to which N-formylmethionyl-tRNA(fMet) subsequently binds. Helps modulate mRNA selection, yielding the 30S pre-initiation complex (PIC). Upon addition of the 50S ribosomal subunit IF-1, IF-2 and IF-3 are released leaving the mature 70S translation initiation complex. This Rhodospirillum rubrum (strain ATCC 11170 / ATH 1.1.1 / DSM 467 / LMG 4362 / NCIMB 8255 / S1) protein is Translation initiation factor IF-1.